Here is a 439-residue protein sequence, read N- to C-terminus: Ribulose bisphosphate carboxylase/oxygenase activase 2, chloroplastic (439 aa).

The N-terminal 58 residues, 1–58, are a transit peptide targeting the chloroplast; that stretch reads MATSVSTIGAANKAPLSLNNSVAGTSVPSTAFFGKTLKKVYGKGVSSPKVTNRSLRIA. 169 to 176 contributes to the ATP binding site; the sequence is GGKGQGKS.

It belongs to the RuBisCO activase family.

The protein localises to the plastid. The protein resides in the chloroplast stroma. Activation of RuBisCO (ribulose-1,5-bisphosphate carboxylase/oxygenase; EC 4.1.1.39) involves the ATP-dependent carboxylation of the epsilon-amino group of lysine leading to a carbamate structure. In Nicotiana tabacum (Common tobacco), this protein is Ribulose bisphosphate carboxylase/oxygenase activase 2, chloroplastic (RCA).